A 243-amino-acid polypeptide reads, in one-letter code: Probable phosphatase CBO3379/CLC_3322 (243 aa).

Residues H8, H10, H16, H41, E74, H102, H132, D192, and H194 each contribute to the Zn(2+) site.

The protein belongs to the PHP family. The cofactor is Zn(2+).

This chain is Probable phosphatase CBO3379/CLC_3322, found in Clostridium botulinum (strain Hall / ATCC 3502 / NCTC 13319 / Type A).